The primary structure comprises 85 residues: Large ribosomal subunit protein bL27 (85 aa).

The segment covering 1–10 has biased composition (gly residues); sequence MAQKKGGGST. The disordered stretch occupies residues 1–21; sequence MAQKKGGGSTRNGRDSQPKML.

Belongs to the bacterial ribosomal protein bL27 family.

In Polaromonas naphthalenivorans (strain CJ2), this protein is Large ribosomal subunit protein bL27.